Here is a 208-residue protein sequence, read N- to C-terminus: MTHFLYLTPEILLPFSPLTSTEFELIRRKAQQLWQDETRWSASSMTTYSGSYREKQLDEATCNRLAQRVGQPQFEYKPTPLPGSSAYNTLPGHAGSQEAADGKGRLPDIASPSRDSPLNIKHKVAHQIWGSEVPCPTFLAYRGLRMSPCMQPKKPGFELLMSYRNRGKALLKRLQRQWDYESKLGSSEDSGTDRFSSNTSGSSGRKFK.

Disordered stretches follow at residues 74-117 and 181-208; these read FEYK…RDSP and ESKL…RKFK. The segment covering 184–208 has biased composition (polar residues); the sequence is LGSSEDSGTDRFSSNTSGSSGRKFK.

This is an uncharacterized protein from Mus musculus (Mouse).